The chain runs to 138 residues: uncharacterized protein (138 aa).

This is an uncharacterized protein from Saccharomyces cerevisiae (strain ATCC 204508 / S288c) (Baker's yeast).